A 426-amino-acid chain; its full sequence is MLALRVLLKGKILIGGRVREREVLAEDGWIVKIGKRLNEEADLTLELGKRELAVPAPIDLHVHCRDPHPDYPFGFKTETRRFLLGGVATVVDMPNTRPAPTTPETYYEKEELARENAEIEVIVAGGVRDSQCTKELVEAGAYVLGEVFLATSTDAPAVPWSTLPEIFRELSPDGPLTIFHPELDELVAERPARNLYEHLKNRPPEAETTAVGLLAGLKVRYPSRIHLSHVTLPESVKIAKGADITVDVTPHHLFFDVLRVDPEDPVFKVNPPLRGRHHRLGLLRAVRRGDVDVLASDHAPHILEDEFEDVPSGVTGGEIILPAALTLHRRFGLSLRDAVAMITCRPAKLLGRDDLGEVAVGKRARITVVRMREFVVRAEEFGEEDRKFPYDGMRMFGEPVKLIDGTKVYDLKESRREGKPVILEGE.

His-61 and His-63 together coordinate Zn(2+). Substrate contacts are provided by residues His-63–Arg-65 and Asn-95. Zn(2+) is bound by residues Glu-146, His-180, His-229, and Asp-297. The active site involves Asp-297. His-301 lines the substrate pocket.

The protein belongs to the metallo-dependent hydrolases superfamily. DHOase family. Class I DHOase subfamily. Zn(2+) serves as cofactor.

The catalysed reaction is (S)-dihydroorotate + H2O = N-carbamoyl-L-aspartate + H(+). Its pathway is pyrimidine metabolism; UMP biosynthesis via de novo pathway; (S)-dihydroorotate from bicarbonate: step 3/3. Its function is as follows. Catalyzes the reversible cyclization of carbamoyl aspartate to dihydroorotate. This chain is Dihydroorotase, found in Methanopyrus kandleri (strain AV19 / DSM 6324 / JCM 9639 / NBRC 100938).